The primary structure comprises 126 residues: Holo-[acyl-carrier-protein] synthase (126 aa).

The Mg(2+) site is built by Asp-9 and Glu-58.

Belongs to the P-Pant transferase superfamily. AcpS family. The cofactor is Mg(2+).

It is found in the cytoplasm. It carries out the reaction apo-[ACP] + CoA = holo-[ACP] + adenosine 3',5'-bisphosphate + H(+). Its function is as follows. Transfers the 4'-phosphopantetheine moiety from coenzyme A to a Ser of acyl-carrier-protein. This Photobacterium profundum (strain SS9) protein is Holo-[acyl-carrier-protein] synthase.